The following is an 86-amino-acid chain: Putative antitoxin VapB36 (86 aa).

Its function is as follows. Possibly the antitoxin component of a type II toxin-antitoxin (TA) system. Its cognate toxin is VapC36 (Potential). This is Putative antitoxin VapB36 (vapB36) from Mycobacterium tuberculosis (strain CDC 1551 / Oshkosh).